A 1399-amino-acid chain; its full sequence is DNA-directed RNA polymerase subunit beta' (1399 aa).

Zn(2+)-binding residues include Cys-70, Cys-72, Cys-85, and Cys-88. Mg(2+)-binding residues include Asp-460, Asp-462, and Asp-464. Positions 814, 888, 895, and 898 each coordinate Zn(2+).

This sequence belongs to the RNA polymerase beta' chain family. In terms of assembly, the RNAP catalytic core consists of 2 alpha, 1 beta, 1 beta' and 1 omega subunit. When a sigma factor is associated with the core the holoenzyme is formed, which can initiate transcription. Mg(2+) serves as cofactor. It depends on Zn(2+) as a cofactor.

It carries out the reaction RNA(n) + a ribonucleoside 5'-triphosphate = RNA(n+1) + diphosphate. In terms of biological role, DNA-dependent RNA polymerase catalyzes the transcription of DNA into RNA using the four ribonucleoside triphosphates as substrates. The sequence is that of DNA-directed RNA polymerase subunit beta' from Ectopseudomonas mendocina (strain ymp) (Pseudomonas mendocina).